The following is a 320-amino-acid chain: Probable cell division protein WhiA (320 aa).

Positions 276 to 310 (TLKELGEMVAGGKISKSGINHRLRKIDEIAERLRA) form a DNA-binding region, H-T-H motif.

The protein belongs to the WhiA family.

Involved in cell division and chromosome segregation. This chain is Probable cell division protein WhiA, found in Geobacillus thermodenitrificans (strain NG80-2).